The sequence spans 572 residues: mRNA cap guanine-N(7) methyltransferase (572 aa).

Disordered stretches follow at residues 1–75 and 110–140; these read MPED…GSRV and EKAINTANPPPPSTTTTPSSTTSSSSSFPSS. 2 stretches are compositionally biased toward basic and acidic residues: residues 24 to 39 and 59 to 69; these read ANDGHTEFSRRDRVHD and SADENKDKKYD. Positions 123–140 are enriched in low complexity; the sequence is TTTTPSSTTSSSSSFPSS. The mRNA cap 0 methyltransferase domain maps to 262 to 571; the sequence is SPIYKLRNFN…FYVAFVFEKV (310 aa). MRNA is bound at residue 271-272; it reads NN. S-adenosyl-L-methionine-binding residues include K275, C302, D324, D366, Q396, and Y401.

The protein belongs to the class I-like SAM-binding methyltransferase superfamily. mRNA cap 0 methyltransferase family.

It is found in the nucleus. It carries out the reaction a 5'-end (5'-triphosphoguanosine)-ribonucleoside in mRNA + S-adenosyl-L-methionine = a 5'-end (N(7)-methyl 5'-triphosphoguanosine)-ribonucleoside in mRNA + S-adenosyl-L-homocysteine. In terms of biological role, responsible for methylating the 5'-cap structure of mRNAs. In Lodderomyces elongisporus (strain ATCC 11503 / CBS 2605 / JCM 1781 / NBRC 1676 / NRRL YB-4239) (Yeast), this protein is mRNA cap guanine-N(7) methyltransferase (ABD1).